The sequence spans 139 residues: D-ribose pyranase (139 aa).

The active-site Proton donor is the H20. Substrate contacts are provided by residues D28, H106, and 128-130 (YAN).

It belongs to the RbsD / FucU family. RbsD subfamily. In terms of assembly, homodecamer.

The protein resides in the cytoplasm. The catalysed reaction is beta-D-ribopyranose = beta-D-ribofuranose. The protein operates within carbohydrate metabolism; D-ribose degradation; D-ribose 5-phosphate from beta-D-ribopyranose: step 1/2. Catalyzes the interconversion of beta-pyran and beta-furan forms of D-ribose. The protein is D-ribose pyranase of Aliivibrio fischeri (strain ATCC 700601 / ES114) (Vibrio fischeri).